Here is a 385-residue protein sequence, read N- to C-terminus: Putative RNA methyltransferase YpsC (385 aa).

Residues 44–156 (AICRANLWLR…KDQALITLDS (113 aa)) form the THUMP domain.

This sequence belongs to the methyltransferase superfamily. In terms of assembly, interacts with the RNA polymerase core.

The sequence is that of Putative RNA methyltransferase YpsC (ypsC) from Bacillus subtilis (strain 168).